The chain runs to 297 residues: Phosphatidylglycerol--prolipoprotein diacylglyceryl transferase (297 aa).

A run of 3 helical transmembrane segments spans residues 17–37 (LAVRWYGLMYLVGFIAAIVVG), 59–79 (MLFYGVLGTVLGGRLGYVLFY), and 97–117 (GGMSFHGGFLGVTLAMVLFAW). An a 1,2-diacyl-sn-glycero-3-phospho-(1'-sn-glycerol)-binding site is contributed by Arg142. Transmembrane regions (helical) follow at residues 230-250 (MGAVSALFLIGYGLARFTVEF) and 257-277 (FLGLLALGLSMGQWLSLPMIV).

It belongs to the Lgt family.

Its subcellular location is the cell inner membrane. It catalyses the reaction L-cysteinyl-[prolipoprotein] + a 1,2-diacyl-sn-glycero-3-phospho-(1'-sn-glycerol) = an S-1,2-diacyl-sn-glyceryl-L-cysteinyl-[prolipoprotein] + sn-glycerol 1-phosphate + H(+). The protein operates within protein modification; lipoprotein biosynthesis (diacylglyceryl transfer). Its function is as follows. Catalyzes the transfer of the diacylglyceryl group from phosphatidylglycerol to the sulfhydryl group of the N-terminal cysteine of a prolipoprotein, the first step in the formation of mature lipoproteins. In Burkholderia multivorans (strain ATCC 17616 / 249), this protein is Phosphatidylglycerol--prolipoprotein diacylglyceryl transferase.